Consider the following 282-residue polypeptide: Large ribosomal subunit protein uL2 (282 aa).

The disordered stretch occupies residues 230–282; that stretch reads AMNPIDHPLGGGEGRSSGGRHPVSPWGMPAKGYKTRDKKKASSRLIVKRRGQK. The span at 265 to 282 shows a compositional bias: basic residues; that stretch reads RDKKKASSRLIVKRRGQK.

Belongs to the universal ribosomal protein uL2 family. In terms of assembly, part of the 50S ribosomal subunit. Forms a bridge to the 30S subunit in the 70S ribosome.

One of the primary rRNA binding proteins. Required for association of the 30S and 50S subunits to form the 70S ribosome, for tRNA binding and peptide bond formation. It has been suggested to have peptidyltransferase activity; this is somewhat controversial. Makes several contacts with the 16S rRNA in the 70S ribosome. The chain is Large ribosomal subunit protein uL2 from Desulfovibrio desulfuricans (strain ATCC 27774 / DSM 6949 / MB).